The chain runs to 282 residues: CD320 antigen (282 aa).

The signal sequence occupies residues 1 to 35; the sequence is MSGGWMAQVGAWRTGALGLALLLLLGLGLGLEAAA. Over 36–229 the chain is Extracellular; that stretch reads SPLSTPTSAQ…GDQSGSPTAY (194 aa). One can recognise an LDL-receptor class A 1 domain in the interval 53-90; that stretch reads SCPPTKFQCRTSGLCVPLTWRCDRDLDCSDGSDEEECR. 3 disulfide bridges follow: cysteine 54–cysteine 67, cysteine 61–cysteine 80, and cysteine 74–cysteine 89. Ca(2+) is bound by residues tryptophan 72, aspartate 75, aspartate 77, aspartate 79, aspartate 85, and glutamate 86. Asparagine 126 is a glycosylation site (N-linked (GlcNAc...) asparagine). The region spanning 131 to 168 is the LDL-receptor class A 2 domain; it reads ACLAGELRCTLSDDCIPLTWRCDGHPDCPDSSDELGCG. Intrachain disulfides connect cysteine 132-cysteine 145, cysteine 139-cysteine 158, and cysteine 152-cysteine 167. Residues tryptophan 150, aspartate 153, histidine 155, aspartate 157, aspartate 163, and glutamate 164 each coordinate Ca(2+). 2 N-linked (GlcNAc...) asparagine glycosylation sites follow: asparagine 195 and asparagine 213. The disordered stretch occupies residues 199–223; sequence MGPPVTLESVPSVGNATSSSAGDQS. Over residues 210–223 the composition is skewed to polar residues; sequence SVGNATSSSAGDQS. Residues 230–250 traverse the membrane as a helical segment; the sequence is GVIAAAAVLSASLVTATLLLL. Residues 251–282 lie on the Cytoplasmic side of the membrane; it reads SWLRAQERLRPLGLLVAMKESLLLSEQKTSLP.

In terms of assembly, interacts (via LDL-receptor class A domains) with TCN2. As to expression, detected in the germinal center (GC) of lymphoid follicles (at protein level). Expressed abundantly on follicular dendritic cells (FDCs).

The protein resides in the cell membrane. In terms of biological role, receptor for transcobalamin saturated with cobalamin (TCbl). Plays an important role in cobalamin uptake. Plasma membrane protein that is expressed on follicular dendritic cells (FDC) and mediates interaction with germinal center B cells. Functions as costimulator to promote B cell responses to antigenic stimuli; promotes B cell differentiation and proliferation. Germinal center-B (GC-B) cells differentiate into memory B-cells and plasma cells (PC) through interaction with T-cells and follicular dendritic cells (FDC). CD320 augments the proliferation of PC precursors generated by IL-10. The polypeptide is CD320 antigen (CD320) (Homo sapiens (Human)).